Here is a 162-residue protein sequence, read N- to C-terminus: Peptide deformylase (162 aa).

Positions 86 and 128 each coordinate Fe cation. Residue Glu129 is part of the active site. His132 is a Fe cation binding site.

This sequence belongs to the polypeptide deformylase family. Requires Fe(2+) as cofactor.

It catalyses the reaction N-terminal N-formyl-L-methionyl-[peptide] + H2O = N-terminal L-methionyl-[peptide] + formate. Functionally, removes the formyl group from the N-terminal Met of newly synthesized proteins. Requires at least a dipeptide for an efficient rate of reaction. N-terminal L-methionine is a prerequisite for activity but the enzyme has broad specificity at other positions. This Treponema pallidum (strain Nichols) protein is Peptide deformylase.